The following is a 131-amino-acid chain: Glycine cleavage system H protein (131 aa).

The 83-residue stretch at 24–106 folds into the Lipoyl-binding domain; sequence RVTVGISDHA…YGEGWIFVVE (83 aa). The residue at position 65 (K65) is an N6-lipoyllysine.

Belongs to the GcvH family. The glycine cleavage system is composed of four proteins: P, T, L and H. (R)-lipoate serves as cofactor.

The glycine cleavage system catalyzes the degradation of glycine. The H protein shuttles the methylamine group of glycine from the P protein to the T protein. This chain is Glycine cleavage system H protein, found in Xanthomonas euvesicatoria pv. vesicatoria (strain 85-10) (Xanthomonas campestris pv. vesicatoria).